A 492-amino-acid chain; its full sequence is B3 domain-containing protein REM3 (492 aa).

Residues 12–104 (NRPFFVRSLA…VFHVTPSGRS (93 aa)) constitute a DNA-binding region (TF-B3 1). Residues 105-116 (FSQIRTSSSSGD) are compositionally biased toward low complexity. The interval 105-134 (FSQIRTSSSSGDYDSDDDDDEAGDDDSDSK) is disordered. Acidic residues predominate over residues 117–131 (YDSDDDDDEAGDDDS). 2 DNA-binding regions (TF-B3) span residues 154 to 250 (YCLL…LCFK) and 286 to 382 (FLTV…FCSE). The segment covering 385–395 (IEQEEAPEERG) has biased composition (basic and acidic residues). A disordered region spans residues 385–427 (IEQEEAPEERGTPLPKRARVSAEVGHSRRTQAPNKSSDDPKIL).

It is found in the nucleus. The chain is B3 domain-containing protein REM3 (REM3) from Arabidopsis thaliana (Mouse-ear cress).